Reading from the N-terminus, the 436-residue chain is L-threonine dehydratase biosynthetic IlvA (436 aa).

Positions Met-1–Val-357 are catalytic. An N6-(pyridoxal phosphate)lysine modification is found at Lys-70. Pyridoxal 5'-phosphate is bound by residues Asn-97, Gly-203–Leu-207, and Ser-329. Residues His-353–Pro-427 form the ACT-like domain. Residues Asn-358 to Thr-436 form a regulatory region.

The protein belongs to the serine/threonine dehydratase family. Homotetramer. Requires pyridoxal 5'-phosphate as cofactor.

It carries out the reaction L-threonine = 2-oxobutanoate + NH4(+). It participates in amino-acid biosynthesis; L-isoleucine biosynthesis; 2-oxobutanoate from L-threonine: step 1/1. Functionally, catalyzes the anaerobic formation of alpha-ketobutyrate and ammonia from threonine in a two-step reaction. The first step involved a dehydration of threonine and a production of enamine intermediates (aminocrotonate), which tautomerizes to its imine form (iminobutyrate). Both intermediates are unstable and short-lived. The second step is the nonenzymatic hydrolysis of the enamine/imine intermediates to form 2-ketobutyrate and free ammonia. In the low water environment of the cell, the second step is accelerated by RidA. In Corynebacterium glutamicum (strain ATCC 13032 / DSM 20300 / JCM 1318 / BCRC 11384 / CCUG 27702 / LMG 3730 / NBRC 12168 / NCIMB 10025 / NRRL B-2784 / 534), this protein is L-threonine dehydratase biosynthetic IlvA (ilvA).